The sequence spans 315 residues: Zinc finger protein 330 homolog (315 aa).

The short motif at 3–11 (KKKTGQRKK) is the Nuclear localization signal element. C4-type zinc fingers lie at residues 40–56 (CDKCEKKQKSRAFCYFC), 65–102 (CAQCGKIKCMLKTGDCVVKHPGVYTTGLGMVGAICDFC), 127–147 (CLECERGVWEHGGRIFKCSFC), and 173–187 (CQSCNKLGQYSCLRC). Disordered stretches follow at residues 228-248 (TRSHKFGRQQQGGNSDDEEGY) and 263-315 (AASG…KATK). Residues 272–303 (GDDDEDESDGDYDDESDEDDDDDEEEDETTES) show a composition bias toward acidic residues. Residues 304-315 (EPEKETDKKATK) are compositionally biased toward basic and acidic residues.

This sequence belongs to the NOA36 family.

It localises to the nucleus. Its subcellular location is the nucleolus. The chain is Zinc finger protein 330 homolog (Noa36) from Drosophila melanogaster (Fruit fly).